Reading from the N-terminus, the 249-residue chain is Orotidine 5'-phosphate decarboxylase (249 aa).

Substrate-binding positions include aspartate 18, lysine 40, 67–76, threonine 127, arginine 188, glutamine 197, glycine 217, and arginine 218; that span reads DLKYHDIPNT. Lysine 69 acts as the Proton donor in catalysis.

This sequence belongs to the OMP decarboxylase family. Type 1 subfamily. In terms of assembly, homodimer.

The catalysed reaction is orotidine 5'-phosphate + H(+) = UMP + CO2. It participates in pyrimidine metabolism; UMP biosynthesis via de novo pathway; UMP from orotate: step 2/2. Functionally, catalyzes the decarboxylation of orotidine 5'-monophosphate (OMP) to uridine 5'-monophosphate (UMP). This Baumannia cicadellinicola subsp. Homalodisca coagulata protein is Orotidine 5'-phosphate decarboxylase.